We begin with the raw amino-acid sequence, 70 residues long: Cold shock-like protein CspG (70 aa).

The 61-residue stretch at 7-67 (GLVKWFNADK…GQRGPAAANV (61 aa)) folds into the CSD domain.

Its subcellular location is the cytoplasm. The chain is Cold shock-like protein CspG (cspG) from Escherichia coli O157:H7.